Reading from the N-terminus, the 374-residue chain is Type IV secretion system protein PtlG homolog (374 aa).

The chain crosses the membrane as a helical span at residues 38–56 (WMFALVAVALSCLLATGIW). Positions 86 to 117 (HPREPEPAPLPDMPAAPDPILPQPRPAPPVPP) are disordered. Positions 92 to 117 (PAPLPDMPAAPDPILPQPRPAPPVPP) are enriched in pro residues.

Belongs to the TrbI/VirB10 family.

It is found in the cell membrane. This chain is Type IV secretion system protein PtlG homolog (ptlG), found in Bordetella bronchiseptica (strain ATCC BAA-588 / NCTC 13252 / RB50) (Alcaligenes bronchisepticus).